The chain runs to 249 residues: ATP synthase subunit a (249 aa).

6 consecutive transmembrane segments (helical) span residues 30–50 (SLYM…GSAG), 84–104 (FFPL…IGVI), 114–134 (LIVT…YGLY), 143–163 (VFVP…IEVI), 193–213 (FVTS…LPLA), and 220–240 (ILEV…TCIY).

The protein belongs to the ATPase A chain family. As to quaternary structure, F-type ATPases have 2 components, CF(1) - the catalytic core - and CF(0) - the membrane proton channel. CF(1) has five subunits: alpha(3), beta(3), gamma(1), delta(1), epsilon(1). CF(0) has three main subunits: a(1), b(2) and c(9-12). The alpha and beta chains form an alternating ring which encloses part of the gamma chain. CF(1) is attached to CF(0) by a central stalk formed by the gamma and epsilon chains, while a peripheral stalk is formed by the delta and b chains.

The protein resides in the cell inner membrane. Its function is as follows. Key component of the proton channel; it plays a direct role in the translocation of protons across the membrane. The sequence is that of ATP synthase subunit a from Afipia carboxidovorans (strain ATCC 49405 / DSM 1227 / KCTC 32145 / OM5) (Oligotropha carboxidovorans).